A 391-amino-acid polypeptide reads, in one-letter code: Ferrochelatase (391 aa).

Histidine 196 and glutamate 281 together coordinate Fe cation.

The protein belongs to the ferrochelatase family.

It localises to the cytoplasm. It catalyses the reaction heme b + 2 H(+) = protoporphyrin IX + Fe(2+). It participates in porphyrin-containing compound metabolism; protoheme biosynthesis; protoheme from protoporphyrin-IX: step 1/1. Its function is as follows. Catalyzes the ferrous insertion into protoporphyrin IX. The sequence is that of Ferrochelatase from Prochlorococcus marinus (strain MIT 9515).